The primary structure comprises 118 residues: UPF0102 protein Franean1_1156 (118 aa).

Belongs to the UPF0102 family.

This chain is UPF0102 protein Franean1_1156, found in Parafrankia sp. (strain EAN1pec).